Reading from the N-terminus, the 527-residue chain is GMP synthase [glutamine-hydrolyzing] (527 aa).

One can recognise a Glutamine amidotransferase type-1 domain in the interval 4–202; it reads KILILDFGSQ…VLQICGARAD (199 aa). Catalysis depends on Cys81, which acts as the Nucleophile. Catalysis depends on residues His176 and Glu178. The 193-residue stretch at 203 to 395 folds into the GMPS ATP-PPase domain; sequence WEMGNYIDEA…LGLPPAMVYR (193 aa). 230–236 is an ATP binding site; sequence SGGVDSS.

Homodimer.

The enzyme catalyses XMP + L-glutamine + ATP + H2O = GMP + L-glutamate + AMP + diphosphate + 2 H(+). It functions in the pathway purine metabolism; GMP biosynthesis; GMP from XMP (L-Gln route): step 1/1. Its function is as follows. Catalyzes the synthesis of GMP from XMP. The sequence is that of GMP synthase [glutamine-hydrolyzing] from Paraburkholderia phytofirmans (strain DSM 17436 / LMG 22146 / PsJN) (Burkholderia phytofirmans).